The chain runs to 315 residues: Biotin synthase (315 aa).

In terms of domain architecture, Radical SAM core spans Asn-39 to Arg-266. 3 residues coordinate [4Fe-4S] cluster: Cys-54, Cys-58, and Cys-61. Residues Cys-98, Cys-129, Cys-189, and Arg-261 each coordinate [2Fe-2S] cluster.

Belongs to the radical SAM superfamily. Biotin synthase family. In terms of assembly, homodimer. Requires [4Fe-4S] cluster as cofactor. [2Fe-2S] cluster serves as cofactor.

The catalysed reaction is (4R,5S)-dethiobiotin + (sulfur carrier)-SH + 2 reduced [2Fe-2S]-[ferredoxin] + 2 S-adenosyl-L-methionine = (sulfur carrier)-H + biotin + 2 5'-deoxyadenosine + 2 L-methionine + 2 oxidized [2Fe-2S]-[ferredoxin]. It participates in cofactor biosynthesis; biotin biosynthesis; biotin from 7,8-diaminononanoate: step 2/2. Catalyzes the conversion of dethiobiotin (DTB) to biotin by the insertion of a sulfur atom into dethiobiotin via a radical-based mechanism. This is Biotin synthase from Legionella pneumophila (strain Paris).